The primary structure comprises 161 residues: NADH:FMN oxidoreductase (161 aa).

Residues Asp30, 37–40 (AAST), 54–61 (CVQNSSTT), Ala88, Arg94, and Phe151 contribute to the FMN site.

Belongs to the non-flavoprotein flavin reductase family.

Its subcellular location is the cytoplasm. The catalysed reaction is FMNH2 + NAD(+) = FMN + NADH + 2 H(+). It catalyses the reaction FADH2 + NAD(+) = FAD + NADH + 2 H(+). It functions in the pathway sulfur metabolism; dibenzothiophene degradation. Functionally, an NADH:FMN oxidoreductase which supplies reduced FMN for the '4S' desulfurization pathway that removes covalently bound sulfur from dibenzothiophene (DBT) without breaking carbon-carbon bonds. Can also use FAD. Provides DszC and probably also DszA (DBT-monooxygenase and DBTO2-monooxygenase respectively) with reduced flavin (FMN and/or FAD). This Mycolicibacterium goodii (Mycobacterium goodii) protein is NADH:FMN oxidoreductase.